Reading from the N-terminus, the 221-residue chain is Small ribosomal subunit protein uS3 (221 aa).

In terms of domain architecture, KH type-2 spans 39–107 (IREYIKRKLY…QVHVNIVEVK (69 aa)).

The protein belongs to the universal ribosomal protein uS3 family. In terms of assembly, part of the 30S ribosomal subunit. Forms a tight complex with proteins S10 and S14.

Binds the lower part of the 30S subunit head. Binds mRNA in the 70S ribosome, positioning it for translation. In Desulforamulus reducens (strain ATCC BAA-1160 / DSM 100696 / MI-1) (Desulfotomaculum reducens), this protein is Small ribosomal subunit protein uS3.